A 375-amino-acid polypeptide reads, in one-letter code: Succinyl-diaminopimelate desuccinylase (375 aa).

Residue His66 coordinates Zn(2+). Asp68 is a catalytic residue. Residue Asp99 participates in Zn(2+) binding. Glu133 functions as the Proton acceptor in the catalytic mechanism. 3 residues coordinate Zn(2+): Glu134, Glu162, and His348.

This sequence belongs to the peptidase M20A family. DapE subfamily. Homodimer. The cofactor is Zn(2+). Co(2+) is required as a cofactor.

It catalyses the reaction N-succinyl-(2S,6S)-2,6-diaminopimelate + H2O = (2S,6S)-2,6-diaminopimelate + succinate. It participates in amino-acid biosynthesis; L-lysine biosynthesis via DAP pathway; LL-2,6-diaminopimelate from (S)-tetrahydrodipicolinate (succinylase route): step 3/3. Functionally, catalyzes the hydrolysis of N-succinyl-L,L-diaminopimelic acid (SDAP), forming succinate and LL-2,6-diaminopimelate (DAP), an intermediate involved in the bacterial biosynthesis of lysine and meso-diaminopimelic acid, an essential component of bacterial cell walls. The polypeptide is Succinyl-diaminopimelate desuccinylase (Shigella flexneri serotype 5b (strain 8401)).